We begin with the raw amino-acid sequence, 76 residues long: DHHHSTDEPSESSKPCCDECACTKSIPPQCRCTDVRLNSCHSACSSCVCTFSIPAQCVCVDMKDFCYAPCKSSHDD.

Intrachain disulfides connect Cys-16-Cys-70, Cys-17-Cys-32, Cys-20-Cys-66, Cys-22-Cys-30, Cys-40-Cys-47, Cys-44-Cys-59, and Cys-49-Cys-57.

The protein belongs to the Bowman-Birk serine protease inhibitor family.

In Macrotyloma axillare (Perennial horse gram), this protein is Bowman-Birk type proteinase inhibitor DE-3.